The chain runs to 111 residues: MSYPVTSQPQCANTCYQTQLSDWHTGLTDCCNDMPVCLCGTFAPLCLACRISDDFGECCCAPYLPGGLHSLRTGMRERYHIQGSVGHDWAALTFCLPCALCQMARELKIRE.

This sequence belongs to the cornifelin family. Directly or indirectly cross-linked to CE proteins loricin and involucrin (IVL).

It is found in the cytoplasm. In terms of biological role, part of the insoluble cornified cell envelope (CE) of stratified squamous epithelia. The sequence is that of Cornifelin (Cnfn) from Mus musculus (Mouse).